A 753-amino-acid chain; its full sequence is MTILNHTLGFPRVGLRRELKKAQESYWAGNSTREELLAVGRELRARHWDQQKQAGIDLLPVGDFAWYDHVLTTSLLLGNVPARHQNKDGSVDIDTLFRIGRGRAPTGEPAAAAEMTKWFNTNYHYMVPEFVKGQQFKLTWTQLLDEVDEALALGHKVKPVLLGPVTWLWLGKVKGEQFDRLSLLNDILPVYQQVLAELAKRGIEWVQIDEPALVLELPQAWLDAYKPAYDALQGQVKLLLTTYFEGVTPNLDTITALPVQGLHVDLVHGKDDVAELHKRLPSDWLLSAGLINGRNVWRADLTEKYAQIKDIVGKRDLWVASSCSLLHSPIDLSVETRLDAEVKSWFAFALQKCHELALLRDALNSGDTAALAEWSAPIQARRHSTRVHNPAVEKRLAAITAQDSQRANVYEVRAEAQRARFKLPAWPTTTIGSFPQTTEIRTLRLDFKKGNLDANNYRTGIAEHIKQAIVEQERLGLDVLVHGEAERNDMVEYFGEHLDGFVFTQNGWVQSYGSRCVKPPIVIGDISRPAPITVEWAKYAQSLTDKPVKGMLTGPVTILCWSFPREDVSRETIAKQIALALRDEVADLEAAGIGIIQIDEPALREGLPLRRSDWDAYLQWGVEAFRINAAVAKDDTQIHTHMCYCEFNDIMDSIAALDADVITIETSRSDMELLESFEEFDYPNEIGPGVYDIHSPNVPSVEWIEALLKKAAKRIPAERLWVNPDCGLKTRGWPETRAALANMVQAAQNLRRG.

5-methyltetrahydropteroyltri-L-glutamate contacts are provided by residues 17–20 (RELK) and Lys117. Residues 431 to 433 (IGS) and Glu484 contribute to the L-homocysteine site. L-methionine-binding positions include 431-433 (IGS) and Glu484. 5-methyltetrahydropteroyltri-L-glutamate contacts are provided by residues 515-516 (RC) and Trp561. Asp599 is a binding site for L-homocysteine. Asp599 is a binding site for L-methionine. Position 605 (Glu605) interacts with 5-methyltetrahydropteroyltri-L-glutamate. Zn(2+) contacts are provided by His641, Cys643, and Glu665. The active-site Proton donor is the His694. Cys726 serves as a coordination point for Zn(2+).

This sequence belongs to the vitamin-B12 independent methionine synthase family. In terms of assembly, monomer. Zn(2+) serves as cofactor.

The enzyme catalyses 5-methyltetrahydropteroyltri-L-glutamate + L-homocysteine = tetrahydropteroyltri-L-glutamate + L-methionine. Its pathway is amino-acid biosynthesis; L-methionine biosynthesis via de novo pathway; L-methionine from L-homocysteine (MetE route): step 1/1. In terms of biological role, catalyzes the transfer of a methyl group from 5-methyltetrahydrofolate to homocysteine resulting in methionine formation. The chain is 5-methyltetrahydropteroyltriglutamate--homocysteine methyltransferase from Escherichia coli (strain K12).